The following is a 334-amino-acid chain: Glycerol-3-phosphate dehydrogenase [NAD(P)+] (334 aa).

Residues tyrosine 14 and lysine 108 each coordinate NADPH. Residues lysine 108, glycine 140, and serine 142 each coordinate sn-glycerol 3-phosphate. An NADPH-binding site is contributed by alanine 144. Sn-glycerol 3-phosphate is bound by residues lysine 195, aspartate 248, serine 258, arginine 259, and asparagine 260. The active-site Proton acceptor is lysine 195. Position 259 (arginine 259) interacts with NADPH. Glutamate 285 is a binding site for NADPH.

It belongs to the NAD-dependent glycerol-3-phosphate dehydrogenase family.

The protein resides in the cytoplasm. The enzyme catalyses sn-glycerol 3-phosphate + NAD(+) = dihydroxyacetone phosphate + NADH + H(+). It carries out the reaction sn-glycerol 3-phosphate + NADP(+) = dihydroxyacetone phosphate + NADPH + H(+). It functions in the pathway membrane lipid metabolism; glycerophospholipid metabolism. Its function is as follows. Catalyzes the reduction of the glycolytic intermediate dihydroxyacetone phosphate (DHAP) to sn-glycerol 3-phosphate (G3P), the key precursor for phospholipid synthesis. This is Glycerol-3-phosphate dehydrogenase [NAD(P)+] from Mesoplasma florum (strain ATCC 33453 / NBRC 100688 / NCTC 11704 / L1) (Acholeplasma florum).